The primary structure comprises 119 residues: Putative arsenical resistance operon repressor ArsR2 (119 aa).

The HTH arsR-type domain occupies 24–119; it reads VDSDAMATDL…TLDDLRGNHE (96 aa). A DNA-binding region (H-T-H motif) is located at residues 60–83; it reads VCDLEATVGVSQSAVSQALSRLYT.

Transcriptional repressor for the arsR2M operon. This chain is Putative arsenical resistance operon repressor ArsR2 (arsR2), found in Halobacterium salinarum (strain ATCC 700922 / JCM 11081 / NRC-1) (Halobacterium halobium).